The primary structure comprises 348 residues: MADDRKVALDAALKKIEKNFGKGSIMKLGEKADQKISTIPSGSLALDVALGVGGYPRGRIIEVYGPESSGKTTVSLHAIAEVQRNGGTAAFIDAEHALDPQYAEKLGVNIDELLLSQPDTGEQGLEIADALVSSGAIDIVVIDSVAALVPRAEIDGEMGASHVGLQARLMSQALRKLSGSINKTKTIAIFINQIREKVGVMFGNPETTPGGRALKFYATVRLEVRRAEQLKQGTDIVGNRTKIKVVKNKVAPPFKVAEVDIMYGQGISQEGELLDMAVEKDLISKSGAWYGYKEERIGQGRENAKQYMADHPEMMAEVSKLVRDAYGIGDGSTITEEAEGQEELPLDE.

65-72 (GPESSGKT) provides a ligand contact to ATP.

It belongs to the RecA family.

The protein localises to the cytoplasm. Can catalyze the hydrolysis of ATP in the presence of single-stranded DNA, the ATP-dependent uptake of single-stranded DNA by duplex DNA, and the ATP-dependent hybridization of homologous single-stranded DNAs. It interacts with LexA causing its activation and leading to its autocatalytic cleavage. The protein is Protein RecA of Enterococcus faecalis (strain ATCC 700802 / V583).